Reading from the N-terminus, the 99-residue chain is MSTGRPLKSVDYEVFGRVQGVCFRMYTEDEARKIGVVGWVKNTSKGTVTGQVQGPEEKVNSMKSWLSKVGSPSSRIDRTNFSNEKTISKLEYSSFNIRY.

At Ser-2 the chain carries N-acetylserine. In terms of domain architecture, Acylphosphatase-like spans 9–99 (SVDYEVFGRV…LEYSSFNIRY (91 aa)). Active-site residues include Arg-24 and Asn-42. Ser-93 is modified (phosphoserine).

Belongs to the acylphosphatase family.

The catalysed reaction is an acyl phosphate + H2O = a carboxylate + phosphate + H(+). Its physiological role is not yet clear. The chain is Acylphosphatase-2 (ACYP2) from Bos taurus (Bovine).